A 327-amino-acid chain; its full sequence is Cobalamin biosynthesis protein CobD (327 aa).

4 helical membrane passes run 60 to 80, 82 to 102, 159 to 179, and 304 to 324; these read GMWL…VLEL, LPFA…VLLA, DGIV…LFAY, and LFWS…LIGL.

Belongs to the CobD/CbiB family.

The protein localises to the cell membrane. It participates in cofactor biosynthesis; adenosylcobalamin biosynthesis. Functionally, converts cobyric acid to cobinamide by the addition of aminopropanol on the F carboxylic group. In Brucella anthropi (strain ATCC 49188 / DSM 6882 / CCUG 24695 / JCM 21032 / LMG 3331 / NBRC 15819 / NCTC 12168 / Alc 37) (Ochrobactrum anthropi), this protein is Cobalamin biosynthesis protein CobD.